A 527-amino-acid polypeptide reads, in one-letter code: Probable guanine deaminase (527 aa).

Positions 79 and 81 each coordinate Zn(2+). Substrate is bound by residues 81–84 (HAPQ), 212–213 (RF), 239–242 (HISE), and aspartate 329. Zn(2+) is bound by residues histidine 239 and aspartate 329.

It belongs to the metallo-dependent hydrolases superfamily. ATZ/TRZ family. Requires Zn(2+) as cofactor.

It catalyses the reaction guanine + H2O + H(+) = xanthine + NH4(+). It participates in purine metabolism; guanine degradation; xanthine from guanine: step 1/1. In terms of biological role, catalyzes the hydrolytic deamination of guanine, producing xanthine and ammonia. The protein is Probable guanine deaminase of Schizosaccharomyces pombe (strain 972 / ATCC 24843) (Fission yeast).